The following is a 245-amino-acid chain: Carboxy-S-adenosyl-L-methionine synthase (245 aa).

S-adenosyl-L-methionine is bound by residues Tyr-42, Gly-67–Ser-69, Asp-92–Asn-93, Asp-120–Ile-121, Asn-135, and Arg-202.

Belongs to the class I-like SAM-binding methyltransferase superfamily. Cx-SAM synthase family. In terms of assembly, homodimer.

It carries out the reaction prephenate + S-adenosyl-L-methionine = carboxy-S-adenosyl-L-methionine + 3-phenylpyruvate + H2O. In terms of biological role, catalyzes the conversion of S-adenosyl-L-methionine (SAM) to carboxy-S-adenosyl-L-methionine (Cx-SAM). This Vibrio campbellii (strain ATCC BAA-1116) protein is Carboxy-S-adenosyl-L-methionine synthase.